Reading from the N-terminus, the 378-residue chain is Ribosomal RNA large subunit methyltransferase G (378 aa).

It belongs to the methyltransferase superfamily. RlmG family.

Its subcellular location is the cytoplasm. The enzyme catalyses guanosine(1835) in 23S rRNA + S-adenosyl-L-methionine = N(2)-methylguanosine(1835) in 23S rRNA + S-adenosyl-L-homocysteine + H(+). Functionally, specifically methylates the guanine in position 1835 (m2G1835) of 23S rRNA. The polypeptide is Ribosomal RNA large subunit methyltransferase G (Escherichia coli O6:K15:H31 (strain 536 / UPEC)).